The primary structure comprises 203 residues: MDELILPILILLFLVFVAYFFTKKSKKEENELQMMKKNQEVRKIVENARIRNDLPCLSGFKFGLSLRHIEDMGVSYTHLSRNFGTDLYVIEGRFAPIKNDLIESYFVDINSELGLTRITGNFFSTNNLDFIMEYYKRLLLEKYHEGIVNINDEMNLVLTLDEVIIQLSNIESNISLIYSLIKSDTPEQLAEMLKVQEKDKLGI.

A signal peptide spans 1-20; sequence MDELILPILILLFLVFVAYF.

This is an uncharacterized protein from Pasteurella multocida (strain Pm70).